The following is a 228-amino-acid chain: MTLPARPEPITLKPSETAVVVVDMQNAYSTEGGYVDLAGFDISGAKGTIANIKKTLDAARAAGVQVIYFQNGWDKDYVEAGGPGSPNWHKSNALKTMRKRPELQGQLLAKGTWDYAIVDELQPQPGDILVPKTRYSGFFNTNMDSVLRARGIRNLVFVGIATNVCVESSLRDAFHLEYFGVMLEDATHHLGPDFIQQATVYNVEKFFGWVATVNDFCGVISQAAPVTD.

Asp23 functions as the Proton acceptor in the catalytic mechanism. The active site involves Lys132. The Nucleophile role is filled by Cys165.

This sequence belongs to the isochorismatase family. RutB subfamily.

The catalysed reaction is (Z)-3-ureidoacrylate + H2O + H(+) = (Z)-3-aminoacrylate + NH4(+) + CO2. It catalyses the reaction (Z)-3-ureidoacrylate + H2O = (Z)-3-aminoacrylate + carbamate + H(+). It carries out the reaction (Z)-2-methylureidoacrylate + H2O + H(+) = (Z)-2-methylaminoacrylate + NH4(+) + CO2. Its function is as follows. Hydrolyzes ureidoacrylate to form aminoacrylate and carbamate. The carbamate hydrolyzes spontaneously, thereby releasing one of the nitrogen atoms of the pyrimidine ring as ammonia and one of its carbon atoms as CO2. This chain is Ureidoacrylate amidohydrolase RutB, found in Agrobacterium fabrum (strain C58 / ATCC 33970) (Agrobacterium tumefaciens (strain C58)).